A 328-amino-acid chain; its full sequence is D-cysteine desulfhydrase (328 aa).

K51 is modified (N6-(pyridoxal phosphate)lysine).

It belongs to the ACC deaminase/D-cysteine desulfhydrase family. As to quaternary structure, homodimer. Pyridoxal 5'-phosphate serves as cofactor.

The catalysed reaction is D-cysteine + H2O = hydrogen sulfide + pyruvate + NH4(+) + H(+). Its function is as follows. Catalyzes the alpha,beta-elimination reaction of D-cysteine and of several D-cysteine derivatives. It could be a defense mechanism against D-cysteine. In Escherichia coli O9:H4 (strain HS), this protein is D-cysteine desulfhydrase.